Consider the following 276-residue polypeptide: Protein-glutamine gamma-glutamyltransferase (276 aa).

Belongs to the bacillus TGase family.

The catalysed reaction is L-glutaminyl-[protein] + L-lysyl-[protein] = [protein]-L-lysyl-N(6)-5-L-glutamyl-[protein] + NH4(+). In terms of biological role, probably plays a role in the assembly of the spore coat proteins by catalyzing epsilon-(gamma-glutamyl)lysine cross-links. In Bacillus cereus (strain AH820), this protein is Protein-glutamine gamma-glutamyltransferase.